The primary structure comprises 501 residues: MTPGALLMLLGALGAPLAPGVRGSEAEGRLREKLFSGYDSSVRPAREVGDRVRVSVGLILAQLISLNEKDEEMSTKVYLDLEWTDYRLSWDPAEHDGIDSLRITAESVWLPDVVLLNNNDGNFDVALDISVVVSSDGSVRWQPPGIYRSSCSIQVTYFPFDWQNCTMVFSSYSYDSSEVSLQTGLGPDGQGHQEIHIHEGTFIENGQWEIIHKPSRLIQPPGDPRGGREGQRQEVIFYLIIRRKPLFYLVNVIAPCILITLLAIFVFYLPPDAGEKMGLSIFALLTLTVFLLLLADKVPETSLSVPIIIKYLMFTMVLVTFSVILSVVVLNLHHRSPHTHQMPLWVRQIFIHKLPLYLRLKRPKPERDLMPEPPHCSSPGSGWGRGTDEYFIRKPPSDFLFPKPNRFQPELSAPDLRRFIDGPNRAVALLPELREVVSSISYIARQLQEQEDHDALKEDWQFVAMVVDRLFLWTFIIFTSVGTLVIFLDATYHLPPPDPFP.

The first 23 residues, 1-23, serve as a signal peptide directing secretion; the sequence is MTPGALLMLLGALGAPLAPGVRG. Residues 24 to 244 lie on the Extracellular side of the membrane; it reads SEAEGRLREK…VIFYLIIRRK (221 aa). Cys151 and Cys165 form a disulfide bridge. An N-linked (GlcNAc...) asparagine glycan is attached at Asn164. Helical transmembrane passes span 245 to 269, 277 to 295, and 311 to 332; these read PLFY…VFYL, MGLS…LLLA, and YLMF…VLNL. At 333-469 the chain is on the cytoplasmic side; it reads HHRSPHTHQM…WQFVAMVVDR (137 aa). Tyr390 carries the phosphotyrosine; by Tyr-kinases modification. A helical transmembrane segment spans residues 470–488; that stretch reads LFLWTFIIFTSVGTLVIFL.

Belongs to the ligand-gated ion channel (TC 1.A.9) family. Acetylcholine receptor (TC 1.A.9.1) subfamily. Beta-1/CHRNB1 sub-subfamily. As to quaternary structure, pentamer of two alpha chains, and one each of the beta, delta, and gamma (in immature muscle) or epsilon (in mature muscle) chains. The muscle heteropentamer composed of alpha-1, beta-1, delta, epsilon subunits interacts with the alpha-conotoxin ImII.

Its subcellular location is the postsynaptic cell membrane. The protein resides in the cell membrane. It carries out the reaction K(+)(in) = K(+)(out). The catalysed reaction is Na(+)(in) = Na(+)(out). After binding acetylcholine, the AChR responds by an extensive change in conformation that affects all subunits and leads to opening of an ion-conducting channel across the plasma membrane. The polypeptide is Acetylcholine receptor subunit beta (Homo sapiens (Human)).